Reading from the N-terminus, the 207-residue chain is Large ribosomal subunit protein uL4 (207 aa).

The interval 44–78 is disordered; that stretch reads QRQGTHDVKNRSEVRGGGRKPWRQKGTGRARQGSI. Basic and acidic residues predominate over residues 47–59; that stretch reads GTHDVKNRSEVRG. The span at 60 to 71 shows a compositional bias: basic residues; it reads GGRKPWRQKGTG.

It belongs to the universal ribosomal protein uL4 family. As to quaternary structure, part of the 50S ribosomal subunit.

One of the primary rRNA binding proteins, this protein initially binds near the 5'-end of the 23S rRNA. It is important during the early stages of 50S assembly. It makes multiple contacts with different domains of the 23S rRNA in the assembled 50S subunit and ribosome. Its function is as follows. Forms part of the polypeptide exit tunnel. In Brevibacillus brevis (strain 47 / JCM 6285 / NBRC 100599), this protein is Large ribosomal subunit protein uL4.